Consider the following 564-residue polypeptide: MAPKDIMTNSHAKSILNAMNALRKSNTLCDITLRVEGTDFPAHRIVLAACSDYFCAMFTSELAEKGKSFVDIQGLTASTMEILLDFVYTETVLVTVENVQELLPAACLLQLKGVKRACCDFLNSQLDPSNCLGIRDFAETHNCLDLMQAAELFSQKHFAEVVQQEEFMLLSQSEVEKLIKCDEIQVDSEEPVFEAVLNWVKHNRKEREPYLPDLLEYVRMPLLTPRYITDVIDAEPLIRCSLPCRDLVDEAKKFHLRPELRSEMQSPRTQARLGAKEVLLVIGGFGSQQSPIDIVEKYDPKTREWSFLPNIARKRRYVATVALNDRVYVIGGYDGRSRLSSVECLDYTADEDGVWYSVATMNVRRGLAGATTLGDMIYVAGGFDGSRRHTSMERYDPNIDQWSMLGDMQTAREGAGLVVASGLIYCLGGYDGLNILNSVERYDPHTGHWTSVTPMANKRSGAGVALLNDHIYVVGGFDGTAHLSSVEVYNIRTDYWTTVANMTTPRCYVGATVLRGRLYAIAGYDGNSLLSSIECYDPVIDSWEVVTSMATQRCDAGVCVLREK.

Residues Cys29–Val96 enclose the BTB domain. Positions Cys131–Ile232 constitute a BACK domain. 6 Kelch repeats span residues Val278–Asp325, Val327–Asp375, Met376–Gly422, Leu423–Asp469, Ile471–Gly516, and Leu518–Glu563.

As to quaternary structure, component of the BCR(KLHL12) E3 ubiquitin ligase complex.

The protein localises to the cytoplasmic vesicle. It is found in the COPII-coated vesicle. It functions in the pathway protein modification; protein ubiquitination. Functionally, substrate-specific adapter of a BCR (BTB-CUL3-RBX1) E3 ubiquitin ligase complex that acts as a negative regulator of Wnt signaling pathway and ER-Golgi transport. The BCR(KLHL12) complex is involved in ER-Golgi transport by regulating the size of COPII coats, thereby playing a key role in collagen export, which is required for embryonic stem (ES) cells division. Negatively regulates the Wnt signaling pathway, possibly via the targeted ubiquitination and subsequent proteolysis of dvl2 and dvl3. Regulates convergent-extension movements during early embryonic development. This chain is Kelch-like protein 12 (klhl12), found in Danio rerio (Zebrafish).